The following is a 475-amino-acid chain: Equilibrative nucleoside transporter 3 (475 aa).

The tract at residues 1–24 is disordered; that stretch reads MAVVSEDDFQHSSNSTYRTTSSSL. Topologically, residues 1 to 53 are cytoplasmic; it reads MAVVSEDDFQHSSNSTYRTTSSSLRADQEALLEKLLDRPPPGLQRPEDRFCGT. The segment covering 12–23 has biased composition (low complexity); it reads SSNSTYRTTSSS. Phosphoserine occurs at positions 21 and 23. A Dileucine internalization motif motif is present at residues 31 to 32; that stretch reads LL. A helical transmembrane segment spans residues 54 to 74; the sequence is YIIFFSLGIGSLLPWNFFITA. The Extracellular portion of the chain corresponds to 75 to 105; sequence KEYWMFKLRNSSSPATGEDPEGSDILNYFES. Asn84 carries an N-linked (GlcNAc...) asparagine glycan. Residues 106 to 126 traverse the membrane as a helical segment; sequence YLAVASTVPSMLCLVANFLLV. The Cytoplasmic portion of the chain corresponds to 127–134; the sequence is NRVAVHIR. A helical transmembrane segment spans residues 135 to 155; that stretch reads VLASLTVILAIFMVITALVKV. Topologically, residues 156–162 are extracellular; it reads DTSSWTR. Residues 163–183 traverse the membrane as a helical segment; the sequence is GFFAVTIVCMVILSGASTVFS. Topologically, residues 184–199 are cytoplasmic; the sequence is SSIYGMTGSFPMRNSQ. The chain crosses the membrane as a helical span at residues 200–220; that stretch reads ALISGGAMGGTVSAVASLVDL. The Extracellular segment spans residues 221 to 230; sequence AASSDVRNSA. The chain crosses the membrane as a helical span at residues 231–251; it reads LAFFLTATVFLVLCMGLYLLL. The Cytoplasmic segment spans residues 252–305; sequence SRLEYARYYMRPVLAAHVFSGEEELPQDSLSAPSVASRFIDSHTPPLRPILKKT. The helical transmembrane segment at 306-326 threads the bilayer; sequence ASLGFCVTYVFFITSLIYPAI. Over 327–337 the chain is Extracellular; sequence CTNIESLNKGS. Residues 338-358 form a helical membrane-spanning segment; that stretch reads GSLWTTKFFIPLTTFLLYNFA. Residues 359-377 are Cytoplasmic-facing; the sequence is DLCGRQLTAWIQVPGPNSK. Residues 378 to 398 traverse the membrane as a helical segment; it reads ALPGFVLLRTCLIPLFVLCNY. The Extracellular portion of the chain corresponds to 399–415; the sequence is QPRVHLKTVVFQSDVYP. The helical transmembrane segment at 416 to 436 threads the bilayer; sequence ALLSSLLGLSNGYLSTLALLY. Over 437-454 the chain is Cytoplasmic; sequence GPKIVPRELAEATGVVMS. The chain crosses the membrane as a helical span at residues 455–475; sequence FYVCLGLTLGSACSTLLVHLI.

It belongs to the SLC29A/ENT transporter (TC 2.A.57) family. As to expression, widely expressed in both adult and fetal tissues. Highest levels in placenta, uterus, ovary, spleen, lymph node and bone marrow. Expressed in liver. Lowest levels in brain and heart. Expressed in macrophages.

The protein resides in the lysosome membrane. The protein localises to the late endosome membrane. Its subcellular location is the mitochondrion membrane. It is found in the cell membrane. It catalyses the reaction adenosine(in) = adenosine(out). The catalysed reaction is guanosine(in) = guanosine(out). It carries out the reaction inosine(in) = inosine(out). The enzyme catalyses uridine(out) = uridine(in). It catalyses the reaction cytidine(in) = cytidine(out). The catalysed reaction is thymidine(in) = thymidine(out). It carries out the reaction 2'-deoxyadenosine(in) = 2'-deoxyadenosine(out). The enzyme catalyses 2'-deoxycytidine(in) = 2'-deoxycytidine(out). It catalyses the reaction guanine(out) = guanine(in). The catalysed reaction is uracil(in) = uracil(out). It carries out the reaction (R)-noradrenaline(out) = (R)-noradrenaline(in). The enzyme catalyses dopamine(out) = dopamine(in). It catalyses the reaction serotonin(out) = serotonin(in). The catalysed reaction is tyramine(in) = tyramine(out). It carries out the reaction ATP(in) = ATP(out). Functionally, uniporter that mediates the facilitative transport of nucleoside across lysosomal and mitochondrial membranes. Functions as a non-electrogenic Na(+)-independent transporter. Substrate transport is pH-dependent and enhanced under acidic condition, probably reflecting the location of the transporter in acidic intracellular compartments. Proton is not a cotransporting ion but most likely change the ionization state of the transporter which dictates transport-permissible/impermissible conformation for nucleoside translocation. May direct the nucleoside transport from lysosomes to cytosol or cytosol to mitochondria to facilitate the fundamental function of salvage synthesis of nucleic acids. Involved in the transport of nucleosides (adenosine, guanosine, uridine, thymidine, cytidine and inosine) and deoxynucleosides (deoxyadenosine, deoxycytidine). Also mediates transport of purine nucleobases (adenine, guanine) and pyrimidine nucleobases (uracil). Also able to transport monoamine neurotransmitters dopamine, serotonin, noradrenaline and tyramine. Capable of transporting ATP. Mediates nucleoside export from lysosomes in macrophages, which regulates macrophage functions and numbers. The sequence is that of Equilibrative nucleoside transporter 3 from Homo sapiens (Human).